Consider the following 454-residue polypeptide: uncharacterized protein (454 aa).

Residues Cys73, Cys79, Cys82, and Cys154 each coordinate [4Fe-4S] cluster. S-adenosyl-L-methionine-binding residues include Gln279, Phe307, Asp328, and Asp381. Catalysis depends on Cys408, which acts as the Nucleophile.

The protein belongs to the class I-like SAM-binding methyltransferase superfamily. RNA M5U methyltransferase family.

This is an uncharacterized protein from Leptospira interrogans serogroup Icterohaemorrhagiae serovar Lai (strain 56601).